A 172-amino-acid polypeptide reads, in one-letter code: 3-hydroxydecanoyl-[acyl-carrier-protein] dehydratase (172 aa).

Residue His71 is part of the active site.

The protein belongs to the thioester dehydratase family. FabA subfamily. As to quaternary structure, homodimer.

It localises to the cytoplasm. It carries out the reaction a (3R)-hydroxyacyl-[ACP] = a (2E)-enoyl-[ACP] + H2O. The enzyme catalyses (3R)-hydroxydecanoyl-[ACP] = (2E)-decenoyl-[ACP] + H2O. The catalysed reaction is (2E)-decenoyl-[ACP] = (3Z)-decenoyl-[ACP]. Its pathway is lipid metabolism; fatty acid biosynthesis. Necessary for the introduction of cis unsaturation into fatty acids. Catalyzes the dehydration of (3R)-3-hydroxydecanoyl-ACP to E-(2)-decenoyl-ACP and then its isomerization to Z-(3)-decenoyl-ACP. Can catalyze the dehydratase reaction for beta-hydroxyacyl-ACPs with saturated chain lengths up to 16:0, being most active on intermediate chain length. The protein is 3-hydroxydecanoyl-[acyl-carrier-protein] dehydratase of Escherichia coli (strain SE11).